A 149-amino-acid chain; its full sequence is Large ribosomal subunit protein bL9 (149 aa).

Belongs to the bacterial ribosomal protein bL9 family.

Functionally, binds to the 23S rRNA. In Leptospira interrogans serogroup Icterohaemorrhagiae serovar copenhageni (strain Fiocruz L1-130), this protein is Large ribosomal subunit protein bL9.